A 68-amino-acid chain; its full sequence is Large ribosomal subunit protein bL35 (68 aa).

This sequence belongs to the bacterial ribosomal protein bL35 family.

This is Large ribosomal subunit protein bL35 from Rickettsia bellii (strain RML369-C).